The primary structure comprises 273 residues: Probable ribosomal RNA small subunit methyltransferase A (273 aa).

Residues N23, L25, G50, E71, D95, and N110 each coordinate S-adenosyl-L-methionine.

It belongs to the class I-like SAM-binding methyltransferase superfamily. rRNA adenine N(6)-methyltransferase family. RsmA subfamily.

It is found in the cytoplasm. Functionally, specifically dimethylates two adjacent adenosines in the loop of a conserved hairpin near the 3'-end of 16S rRNA in the 30S particle. May play a critical role in biogenesis of 30S subunits. The chain is Probable ribosomal RNA small subunit methyltransferase A from Pyrococcus furiosus (strain ATCC 43587 / DSM 3638 / JCM 8422 / Vc1).